Here is a 501-residue protein sequence, read N- to C-terminus: Na(+)/H(+) antiporter NhaB (501 aa).

The next 11 helical transmembrane spans lie at 24 to 44, 46 to 66, 90 to 110, 145 to 165, 206 to 226, 239 to 259, 302 to 319, 351 to 371, 395 to 415, 450 to 470, and 478 to 498; these read VILLFLVINPIVMYLLGPGVA, WLLIGEFIFTLAMALKCYPLL, VLTNFPVILLLMFMVAGIYFM, FLDALTVTAVIISVAVGFFSV, LLMHGAIGTALGGVATMVGEP, FAGFFLHMAPVSIPVLFAGLA, ALWIQAVAAVILVFGLAF, FQESLPFTSLLVVFFAVVAVI, MFFIANGLLSMISDNVFVATV, VATPNGQAAFLFLLTSAIAPL, and MVIMALPYTIVMGGVGLYMVT.

This sequence belongs to the NhaB Na(+)/H(+) (TC 2.A.34) antiporter family.

Its subcellular location is the cell inner membrane. The enzyme catalyses 2 Na(+)(in) + 3 H(+)(out) = 2 Na(+)(out) + 3 H(+)(in). Its function is as follows. Na(+)/H(+) antiporter that extrudes sodium in exchange for external protons. In Marinobacter nauticus (strain ATCC 700491 / DSM 11845 / VT8) (Marinobacter aquaeolei), this protein is Na(+)/H(+) antiporter NhaB.